Here is a 227-residue protein sequence, read N- to C-terminus: Acyl-protein thioesterase 1 (227 aa).

Catalysis depends on charge relay system residues S119, D173, and H207.

Belongs to the AB hydrolase superfamily. AB hydrolase 2 family.

It is found in the cytoplasm. The protein resides in the nucleus. It carries out the reaction S-hexadecanoyl-L-cysteinyl-[protein] + H2O = L-cysteinyl-[protein] + hexadecanoate + H(+). Its function is as follows. Hydrolyzes fatty acids from S-acylated cysteine residues in proteins with a strong preference for palmitoylated G-alpha proteins over other acyl substrates. Mediates the deacylation of G-alpha proteins such as GPA1 in vivo, but has weak or no activity toward palmitoylated Ras proteins. Has weak lysophospholipase activity in vitro; however such activity may not exist in vivo. The polypeptide is Acyl-protein thioesterase 1 (Yarrowia lipolytica (strain CLIB 122 / E 150) (Yeast)).